Consider the following 39-residue polypeptide: Photosystem II reaction center protein J (39 aa).

A helical membrane pass occupies residues 7 to 27 (IPLWIVATVAGTGALVVVGLF).

Belongs to the PsbJ family. In terms of assembly, PSII is composed of 1 copy each of membrane proteins PsbA, PsbB, PsbC, PsbD, PsbE, PsbF, PsbH, PsbI, PsbJ, PsbK, PsbL, PsbM, PsbT, PsbX, PsbY, PsbZ, Psb30/Ycf12, peripheral proteins PsbO, CyanoQ (PsbQ), PsbU, PsbV and a large number of cofactors. It forms dimeric complexes.

The protein resides in the cellular thylakoid membrane. In terms of biological role, one of the components of the core complex of photosystem II (PSII). PSII is a light-driven water:plastoquinone oxidoreductase that uses light energy to abstract electrons from H(2)O, generating O(2) and a proton gradient subsequently used for ATP formation. It consists of a core antenna complex that captures photons, and an electron transfer chain that converts photonic excitation into a charge separation. The polypeptide is Photosystem II reaction center protein J (Synechococcus sp. (strain ATCC 27144 / PCC 6301 / SAUG 1402/1) (Anacystis nidulans)).